A 274-amino-acid chain; its full sequence is MEESKTKRKEDRIDLKNTPPQKKSKRDSTNDETARTSLRSIMPRGYKMMENMGYKEGETLGSNESALKEPIKVEINTKRRGIRAEKPDPSTMNDMQMSEQRFIKRESEMKNNKRLKKIWYRIQKVAFEMMGDSDLYNPGEDPRDFNVLWRSYVMQLNEEVAKNDLNNHSNNDNEDKNNMIPMVNESLEASPAIKGEKFGRPSTLIDCDTSIIGSRITKDTELAELEELSIEKRITKLNIFLRSEKYYCFFCGIKYKDEGDLYEHCPGVNEDDHK.

The segment covering 1 to 15 has biased composition (basic and acidic residues); that stretch reads MEESKTKRKEDRIDL. A disordered region spans residues 1–40; that stretch reads MEESKTKRKEDRIDLKNTPPQKKSKRDSTNDETARTSLRS. Positions 41–87 constitute a G-patch domain; sequence IMPRGYKMMENMGYKEGETLGSNESALKEPIKVEINTKRRGIRAEKP.

It is found in the cytoplasm. The protein resides in the nucleus. This is an uncharacterized protein from Saccharomyces cerevisiae (strain ATCC 204508 / S288c) (Baker's yeast).